The following is a 513-amino-acid chain: ATP synthase subunit alpha 2 (513 aa).

169 to 176 (GDRQTGKT) provides a ligand contact to ATP.

The protein belongs to the ATPase alpha/beta chains family. F-type ATPases have 2 components, CF(1) - the catalytic core - and CF(0) - the membrane proton channel. CF(1) has five subunits: alpha(3), beta(3), gamma(1), delta(1), epsilon(1). CF(0) has three main subunits: a(1), b(2) and c(9-12). The alpha and beta chains form an alternating ring which encloses part of the gamma chain. CF(1) is attached to CF(0) by a central stalk formed by the gamma and epsilon chains, while a peripheral stalk is formed by the delta and b chains.

Its subcellular location is the cell inner membrane. It carries out the reaction ATP + H2O + 4 H(+)(in) = ADP + phosphate + 5 H(+)(out). In terms of biological role, produces ATP from ADP in the presence of a proton gradient across the membrane. The alpha chain is a regulatory subunit. The chain is ATP synthase subunit alpha 2 from Pseudoalteromonas atlantica (strain T6c / ATCC BAA-1087).